We begin with the raw amino-acid sequence, 424 residues long: Microcin H47 secretion protein MchE (424 aa).

At 1–25 (MFRQDALENRKMKWQGRAILLPGIP) the chain is on the cytoplasmic side. Residues 26–46 (LWLIMLGSIVFITAFLMFIIV) form a helical membrane-spanning segment. Residues 47 to 424 (GTYSRRVNVS…KHSATGPLND (378 aa)) are Periplasmic-facing.

It belongs to the membrane fusion protein (MFP) (TC 8.A.1) family.

Its subcellular location is the cell inner membrane. Functionally, probably involved, in conjunction with MchF, in the secretion of microcin H47. This is Microcin H47 secretion protein MchE (mchE) from Escherichia coli.